The sequence spans 530 residues: Feruloyl esterase C (530 aa).

An N-terminal signal peptide occupies residues 1 to 25 (MMLTSAILLLTLGVQLSHADDSSRE). 6 disulfides stabilise this stretch: Cys31-Cys78, Cys66-Cys117, Cys190-Cys444, Cys259-Cys276, Cys285-Cys294, and Cys506-Cys528. Catalysis depends on Ser191, which acts as the Acyl-ester intermediate. Residues Asp260, Asp263, Ala265, Asp267, and Val269 each contribute to the Ca(2+) site. Active-site charge relay system residues include Asp403 and His443.

It belongs to the tannase family.

The protein resides in the secreted. It carries out the reaction feruloyl-polysaccharide + H2O = ferulate + polysaccharide.. Involved in degradation of plant cell walls. Hydrolyzes the feruloyl-arabinose ester bond in arabinoxylans as well as the feruloyl-galactose and feruloyl-arabinose ester bonds in pectin. Active against methyl esters of sinapate (MSA) and caffeate (MCA). The sequence is that of Feruloyl esterase C (faeC) from Talaromyces stipitatus (strain ATCC 10500 / CBS 375.48 / QM 6759 / NRRL 1006) (Penicillium stipitatum).